Reading from the N-terminus, the 408-residue chain is Imidazolonepropionase (408 aa).

Fe(3+)-binding residues include His66 and His68. Residues His66 and His68 each contribute to the Zn(2+) site. 4-imidazolone-5-propanoate is bound by residues Arg75, Tyr138, and His171. Tyr138 is an N-formimidoyl-L-glutamate binding site. Residue His236 coordinates Fe(3+). His236 serves as a coordination point for Zn(2+). Gln239 is a 4-imidazolone-5-propanoate binding site. Residue Asp311 participates in Fe(3+) binding. Asp311 contacts Zn(2+). Residues Asn313 and Gly315 each coordinate N-formimidoyl-L-glutamate. Ser316 is a 4-imidazolone-5-propanoate binding site.

The protein belongs to the metallo-dependent hydrolases superfamily. HutI family. Zn(2+) serves as cofactor. It depends on Fe(3+) as a cofactor.

It localises to the cytoplasm. It carries out the reaction 4-imidazolone-5-propanoate + H2O = N-formimidoyl-L-glutamate. The protein operates within amino-acid degradation; L-histidine degradation into L-glutamate; N-formimidoyl-L-glutamate from L-histidine: step 3/3. In terms of biological role, catalyzes the hydrolytic cleavage of the carbon-nitrogen bond in imidazolone-5-propanoate to yield N-formimidoyl-L-glutamate. It is the third step in the universal histidine degradation pathway. This chain is Imidazolonepropionase, found in Idiomarina loihiensis (strain ATCC BAA-735 / DSM 15497 / L2-TR).